Reading from the N-terminus, the 406-residue chain is Tryptophan 2,3-dioxygenase (406 aa).

Substrate contacts are provided by residues 72 to 76 (FIITH) and R144. Residue H328 participates in heme binding. T342 is a substrate binding site.

The protein belongs to the tryptophan 2,3-dioxygenase family. As to quaternary structure, homotetramer. Dimer of dimers. Heme serves as cofactor.

The enzyme catalyses L-tryptophan + O2 = N-formyl-L-kynurenine. It participates in amino-acid degradation; L-tryptophan degradation via kynurenine pathway; L-kynurenine from L-tryptophan: step 1/2. In terms of biological role, heme-dependent dioxygenase that catalyzes the oxidative cleavage of the L-tryptophan (L-Trp) pyrrole ring and converts L-tryptophan to N-formyl-L-kynurenine. Catalyzes the oxidative cleavage of the indole moiety. This Homo sapiens (Human) protein is Tryptophan 2,3-dioxygenase.